Reading from the N-terminus, the 439-residue chain is Rho GTPase-activating protein 1 (439 aa).

Methionine 1 is subject to N-acetylmethionine. Basic and acidic residues predominate over residues 28–48; the sequence is IDEKNWPSDEMPDFPKSDDSK. Residues 28–52 are disordered; sequence IDEKNWPSDEMPDFPKSDDSKSSSP. Residues serine 44, serine 47, serine 50, and serine 51 each carry the phosphoserine modification. Positions 63–218 constitute a CRAL-TRIO domain; the sequence is PYYDIARHQI…QVLKYDDFLK (156 aa). A Phosphotyrosine modification is found at tyrosine 65. Lysine 80 carries the N6-acetyllysine modification. Residues 228-238 carry the SH3-binding motif; that stretch reads PKPMPPRPPLP. Residues 244 to 431 form the Rho-GAP domain; that stretch reads VSLQHLQEKN…FLLDHQGELF (188 aa).

Found in a complex with XPO7, EIF4A1, ARHGAP1, VPS26A, VPS29, VPS35 and SFN. Interacts with BNIPL. As to expression, ubiquitous.

The protein localises to the cytoplasm. GTPase activator for the Rho, Rac and Cdc42 proteins, converting them to the putatively inactive GDP-bound state. Cdc42 seems to be the preferred substrate. This is Rho GTPase-activating protein 1 (ARHGAP1) from Homo sapiens (Human).